Consider the following 174-residue polypeptide: MALLEIIHYPSKILRTISKEVVSFDAKLHQQLDDMHETMIASEGIGLAAIQVGLPLRMLIINLPREDGVQHKEDCLEIINPKFIETGGSMMYREGCLSVPGFYEEVERFEKVKIEYQNRFAEVKVLEASELLAVAIQHEIDHLNGVLFVDKLSILKRKKFEKELKELQKKQKHK.

2 residues coordinate Fe cation: Cys96 and His138. Residue Glu139 is part of the active site. His142 is a binding site for Fe cation.

It belongs to the polypeptide deformylase family. Requires Fe(2+) as cofactor.

The catalysed reaction is N-terminal N-formyl-L-methionyl-[peptide] + H2O = N-terminal L-methionyl-[peptide] + formate. Removes the formyl group from the N-terminal Met of newly synthesized proteins. Requires at least a dipeptide for an efficient rate of reaction. N-terminal L-methionine is a prerequisite for activity but the enzyme has broad specificity at other positions. This is Peptide deformylase from Helicobacter pylori (strain G27).